The primary structure comprises 155 residues: Egg cell-secreted protein 1.5 (155 aa).

The first 32 residues, 1–32 (MATKSTSKPLLLSFLMMSYLISTFHVITVAEG), serve as a signal peptide directing secretion.

Belongs to the plant egg cell-secreted peptide family. As to expression, restricted to female reproductive tissues, specifically accumulating in storage vesicles of the unfertilized egg cell.

It localises to the cytoplasmic vesicle. The protein localises to the secreted. Functionally, involved in the regulation of gamete interactions during the double fertilization and to prevent multiple-pollen tube attraction; mediates the redistribution of the gamete fusogen HAP2/GCS1 to the cell surface after secretion upon sperm arrival. This chain is Egg cell-secreted protein 1.5 (EC1.5), found in Arabidopsis thaliana (Mouse-ear cress).